The sequence spans 801 residues: tRNA(Met) cytidine acetyltransferase TmcA (801 aa).

ATP contacts are provided by residues Gln-228, 256–265 (GRGKSSAVGL), and Arg-412. Residues 457–637 (EELFLKNEEE…YTVIVVKPLS (181 aa)) enclose the N-acetyltransferase domain. Residues 562 to 564 (IAT), 569 to 575 (MGKGLGS), and Glu-602 each bind acetyl-CoA.

The protein belongs to the RNA cytidine acetyltransferase family. TmcA subfamily.

The protein resides in the cytoplasm. The catalysed reaction is cytidine(34) in elongator tRNA(Met) + acetyl-CoA + ATP + H2O = N(4)-acetylcytidine(34) in elongator tRNA(Met) + ADP + phosphate + CoA + H(+). Catalyzes the formation of N(4)-acetylcytidine (ac(4)C) at the wobble position of tRNA(Met), by using acetyl-CoA as an acetyl donor and ATP (or GTP). The sequence is that of tRNA(Met) cytidine acetyltransferase TmcA from Thermofilum pendens (strain DSM 2475 / Hrk 5).